The chain runs to 60 residues: Large ribosomal subunit protein uL30 (60 aa).

It belongs to the universal ribosomal protein uL30 family. Part of the 50S ribosomal subunit.

The chain is Large ribosomal subunit protein uL30 from Burkholderia ambifaria (strain MC40-6).